A 134-amino-acid polypeptide reads, in one-letter code: MWSDPIADMLTRIRNANMVFKEYTDIPASNLKRKICEILKREGFIADYKYIEDGKQGILRVYLKYKGGRKNRERVIHGIVRVSHAGRRVYVDKDHIPKVKNGLGIAILTTSKGVLTDKEARQLGVGGEVIAYVW.

It belongs to the universal ribosomal protein uS8 family. Part of the 30S ribosomal subunit. Contacts proteins S5 and S12.

One of the primary rRNA binding proteins, it binds directly to 16S rRNA central domain where it helps coordinate assembly of the platform of the 30S subunit. The polypeptide is Small ribosomal subunit protein uS8 (Thermotoga neapolitana (strain ATCC 49049 / DSM 4359 / NBRC 107923 / NS-E)).